A 526-amino-acid polypeptide reads, in one-letter code: GMP synthase [glutamine-hydrolyzing] (526 aa).

A Glutamine amidotransferase type-1 domain is found at 3-199; it reads KVAIIDFGSQ…FIKIAGCKTD (197 aa). The active-site Nucleophile is cysteine 83. Active-site residues include histidine 174 and glutamate 176. Residues 200–392 form the GMPS ATP-PPase domain; sequence WTMNSFLDEQ…LGISDEILMR (193 aa). 227 to 233 provides a ligand contact to ATP; sequence SGGVDSS.

Homodimer.

The catalysed reaction is XMP + L-glutamine + ATP + H2O = GMP + L-glutamate + AMP + diphosphate + 2 H(+). The protein operates within purine metabolism; GMP biosynthesis; GMP from XMP (L-Gln route): step 1/1. Its function is as follows. Catalyzes the synthesis of GMP from XMP. In Ehrlichia canis (strain Jake), this protein is GMP synthase [glutamine-hydrolyzing].